Reading from the N-terminus, the 246-residue chain is Deoxycytidylate 5-hydroxymethyltransferase (246 aa).

Cys148 is a catalytic residue.

This sequence belongs to the thymidylate synthase family.

The catalysed reaction is dCMP + (6R)-5,10-methylene-5,6,7,8-tetrahydrofolate + H2O = 5-hydroxymethyl-dCMP + (6S)-5,6,7,8-tetrahydrofolate. This Enterobacteria phage T4 (Bacteriophage T4) protein is Deoxycytidylate 5-hydroxymethyltransferase (42).